The sequence spans 193 residues: Holliday junction branch migration complex subunit RuvA (193 aa).

Residues methionine 1 to leucine 64 form a domain I region. The domain II stretch occupies residues threonine 65–leucine 139. The flexible linker stretch occupies residues leucine 139–alanine 143. Positions serine 144–alanine 193 are domain III.

This sequence belongs to the RuvA family. Homotetramer. Forms an RuvA(8)-RuvB(12)-Holliday junction (HJ) complex. HJ DNA is sandwiched between 2 RuvA tetramers; dsDNA enters through RuvA and exits via RuvB. An RuvB hexamer assembles on each DNA strand where it exits the tetramer. Each RuvB hexamer is contacted by two RuvA subunits (via domain III) on 2 adjacent RuvB subunits; this complex drives branch migration. In the full resolvosome a probable DNA-RuvA(4)-RuvB(12)-RuvC(2) complex forms which resolves the HJ.

It localises to the cytoplasm. The RuvA-RuvB-RuvC complex processes Holliday junction (HJ) DNA during genetic recombination and DNA repair, while the RuvA-RuvB complex plays an important role in the rescue of blocked DNA replication forks via replication fork reversal (RFR). RuvA specifically binds to HJ cruciform DNA, conferring on it an open structure. The RuvB hexamer acts as an ATP-dependent pump, pulling dsDNA into and through the RuvAB complex. HJ branch migration allows RuvC to scan DNA until it finds its consensus sequence, where it cleaves and resolves the cruciform DNA. In Burkholderia thailandensis (strain ATCC 700388 / DSM 13276 / CCUG 48851 / CIP 106301 / E264), this protein is Holliday junction branch migration complex subunit RuvA.